A 160-amino-acid chain; its full sequence is Large ribosomal subunit protein uL18 (160 aa).

This sequence belongs to the universal ribosomal protein uL18 family. Part of the 50S ribosomal subunit. Contacts the 5S and 23S rRNAs.

In terms of biological role, this is one of the proteins that bind and probably mediate the attachment of the 5S RNA into the large ribosomal subunit, where it forms part of the central protuberance. The chain is Large ribosomal subunit protein uL18 from Thermoplasma volcanium (strain ATCC 51530 / DSM 4299 / JCM 9571 / NBRC 15438 / GSS1).